A 66-amino-acid chain; its full sequence is Large ribosomal subunit protein uL29 (66 aa).

It belongs to the universal ribosomal protein uL29 family.

In Hydrogenobaculum sp. (strain Y04AAS1), this protein is Large ribosomal subunit protein uL29.